An 85-amino-acid polypeptide reads, in one-letter code: Alpha-toxin BmalphaTx47 (85 aa).

An N-terminal signal peptide occupies residues 1 to 19; it reads MNYLIVISFALLLMTGVQS. The region spanning 21 to 83 is the LCN-type CS-alpha/beta domain; that stretch reads RDAYIADSEN…VPIRISGSCR (63 aa). 4 disulfides stabilise this stretch: Cys31/Cys82, Cys35/Cys55, Cys41/Cys65, and Cys45/Cys67.

It belongs to the long (4 C-C) scorpion toxin superfamily. Sodium channel inhibitor family. Alpha subfamily. In terms of tissue distribution, expressed by the venom gland.

The protein localises to the secreted. Its function is as follows. Alpha toxins bind voltage-independently at site-3 of sodium channels (Nav) and inhibit the inactivation of the activated channels, thereby blocking neuronal transmission. This toxin expressed with the pET-14b vector has low inhibitory activity on sodium channels (11.33% on rNav1.2/SCN2A, 15.96% on mNav1.4/SCN4A and 5.04% on hNav1.5/SCN5A). When expressed with the pET-28a vector, this toxin has higher inhibitory activities (44.12% on rNav1.2/SCN2A, 25.40% on mNav1.4/SCN4A and 65.34% on hNav1.5/SCN5A). This is Alpha-toxin BmalphaTx47 from Olivierus martensii (Manchurian scorpion).